A 278-amino-acid chain; its full sequence is Putative transposase for insertion sequence element IS986/IS6110 (278 aa).

One can recognise an Integrase catalytic domain in the interval G101–Y268.

Its function is as follows. Involved in the transposition of the insertion sequence. The sequence is that of Putative transposase for insertion sequence element IS986/IS6110 from Mycobacterium bovis (strain ATCC BAA-935 / AF2122/97).